Here is a 250-residue protein sequence, read N- to C-terminus: PTB-containing, cubilin and LRP1-interacting protein (250 aa).

Positions 93-250 constitute a PID domain; that stretch reads VTYLGKVSTT…VSQELESDDG (158 aa). A disordered region spans residues 229–250; that stretch reads DGRIHSNSSSEEVSQELESDDG. A phosphoserine mark is found at serine 236 and serine 247. Over residues 241 to 250 the composition is skewed to acidic residues; sequence VSQELESDDG.

In terms of assembly, found in a complex with PID1/PCLI1, LRP1 and CUBNI. Interacts with LRP1 and CUBN. Expressed in subcutaneous fat, heart, skeletal muscle, brain, colon, thymus, spleen, kidney, liver, small intestine, placenta, lung and peripheral blood leukocyte.

The protein localises to the cytoplasm. Its function is as follows. Increases proliferation of preadipocytes without affecting adipocytic differentiation. The chain is PTB-containing, cubilin and LRP1-interacting protein (PID1) from Homo sapiens (Human).